The sequence spans 54 residues: Putative collagen-like domain-containing protein 065L (54 aa).

The interval 1–54 (MRGLEAPGAVGPTGPSGAPGSQGPDGDVGGMGPEGPKGDDGPVGPKGPQGAAIF) is disordered. The region spanning 7–51 (PGAVGPTGPSGAPGSQGPDGDVGGMGPEGPKGDDGPVGPKGPQGA) is the Collagen-like domain. Gly residues predominate over residues 26–35 (GDVGGMGPEG). Residues 42 to 54 (PVGPKGPQGAAIF) are compositionally biased toward low complexity.

This is Putative collagen-like domain-containing protein 065L from Dryophytes versicolor (chameleon treefrog).